Reading from the N-terminus, the 1324-residue chain is MLFVFILFLPSCLGYIGDFRCIQLVNSNGANVSAPSISTETVEVSQGLGTYYVLDRVYLNATLLLTGYYPVDGSKFRNLALRGTNSVSLSWFQPPYLNQFNDGIFAKVQNLKTSTPSGATAYFPTIVIGSLFGYTSYTVVIEPYNGVIMASVCQYTICQLPYTDCKPNTNGNKLIGFWHTDVKPPICVLKRNFTLNVNADAFYFHFYQHGGTFYAYYADKPSATTFLFSVYIGDILTQYYVLPFICNPTAGSTFAPRYWVTPLVKRQYLFNFNQKGVITSAVDCASSYTSEIKCKTQSMLPSTGVYELSGYTVQPVGVVYRRVANLPACNIEEWLTARSVPSPLNWERKTFQNCNFNLSSLLRYVQAESLFCNNIDASKVYGRCFGSISVDKFAVPRSRQVDLQLGNSGFLQTANYKIDTAATSCQLHYTLPKNNVTINNHNPSSWNRRYGFNDAGVFGKNQHDVVYAQQCFTVRSSYCPCAQPDIVSPCTTQTKPKSAFVNVGDHCEGLGVLEDNCGNADPHKGCICANNSFIGWSHDTCLVNDRCQIFANILLNGINSGTTCSTDLQLPNTEVVTGICVKYDLYGITGQGVFKEVKADYYNSWQTLLYDVNGNLNGFRDLTTNKTYTIRSCYSGRVSAAFHKDAPEPALLYRNINCSYVFSNNISREENPLNYFDSYLGCVVNADNRTDEALPNCDLRMGAGLCVDYSKSRRAHRSVSTGYRLTTFEPYTPMLVNDSVQSVDGLYEMQIPTNFTIGHHEEFIQTRSPKVTIDCAAFVCGDNTACRQQLVEYGSFCVNVNAILNEVNNLLDNMQLQVASALMQGVTISSRLPDGISGPIDDINFSPLLGCIGSTCAEDGNGPSAIRGRSAIEDLLFDKVKLSDVGFVEAYNNCTGGQEVRDLLCVQSFNGIKVLPPVLSESQISGYTTGATAAAMFPPWSAAAGVPFSLSVQYRINGLGVTMNVLSENQKMIASAFNNALGAIQDGFDATNSALGKIQSVVNANAEALNNLLNQLSNRFGAISASLQEILTRLEAVEAKAQIDRLINGRLTALNAYISKQLSDSTLIKVSAAQAIEKVNECVKSQTTRINFCGNGNHILSLVQNAPYGLYFIHFSYVPISFTTANVSPGLCISGDRGLAPKAGYFVQDDGEWKFTGSSYYYPEPITDKNSVIMSSCAVNYTKAPEVFLNTSIPNPPDFKEELDKWFKNQTSIAPDLSLDFEKLNVTLLDLTYEMNRIQDAIKKLNESYINLKEVGTYEMYVKWPWYVWLLIGLAGVAVCVLLFFICCCTGCGSCCFKKCGNCCDEYGGHQDSIVIHNISSHED.

An N-terminal signal peptide occupies residues 1–13; it reads MLFVFILFLPSCL. Residues 14 to 1265 are Extracellular-facing; the sequence is GYIGDFRCIQ…GTYEMYVKWP (1252 aa). Residues 15 to 296 enclose the BetaCoV S1-NTD domain; it reads YIGDFRCIQL…SYTSEIKCKT (282 aa). Positions 17 to 330 are receptor binding site; it reads GDFRCIQLVN…RRVANLPACN (314 aa). Intrachain disulfides connect cysteine 21–cysteine 158, cysteine 153–cysteine 187, cysteine 165–cysteine 246, cysteine 284–cysteine 294, and cysteine 329–cysteine 354. 2 N-linked (GlcNAc...) asparagine; by host glycosylation sites follow: asparagine 31 and asparagine 60. A glycan (N-linked (GlcNAc...) asparagine; by host) is linked at asparagine 192. The 240-residue stretch at 327 to 566 folds into the BetaCoV S1-CTD domain; sequence PACNIEEWLT…GINSGTTCST (240 aa). N-linked (GlcNAc...) asparagine; by host glycosylation is present at asparagine 357. Intrachain disulfides connect cysteine 372–cysteine 425 and cysteine 384–cysteine 564. Asparagine 435, asparagine 530, asparagine 625, asparagine 657, asparagine 665, asparagine 688, asparagine 737, and asparagine 754 each carry an N-linked (GlcNAc...) asparagine; by host glycan. Fusion peptide stretches follow at residues 870-891 and 889-909; these read SAIE…VEAY and EAYN…VQSF. N-linked (GlcNAc...) asparagine; by host glycosylation is present at asparagine 893. A disulfide bridge links cysteine 894 with cysteine 905. The segment at 970–1020 is heptad repeat 1; it reads QKMIASAFNNALGAIQDGFDATNSALGKIQSVVNANAEALNNLLNQLSNRF. Positions 999–1043 form a coiled coil; that stretch reads QSVVNANAEALNNLLNQLSNRFGAISASLQEILTRLEAVEAKAQI. N-linked (GlcNAc...) asparagine; by host glycosylation is found at asparagine 1180, asparagine 1190, asparagine 1209, asparagine 1225, and asparagine 1246. A heptad repeat 2 region spans residues 1214 to 1254; that stretch reads APDLSLDFEKLNVTLLDLTYEMNRIQDAIKKLNESYINLKE. A coiled-coil region spans residues 1227–1255; sequence TLLDLTYEMNRIQDAIKKLNESYINLKEV. The chain crosses the membrane as a helical span at residues 1266-1286; it reads WYVWLLIGLAGVAVCVLLFFI. Residues 1287-1324 are Cytoplasmic-facing; sequence CCCTGCGSCCFKKCGNCCDEYGGHQDSIVIHNISSHED. The KxHxx signature appears at 1320-1324; it reads SSHED.

This sequence belongs to the betacoronaviruses spike protein family. As to quaternary structure, homotrimer; each monomer consists of a S1 and a S2 subunit. The resulting peplomers protrude from the virus surface as spikes. Cytoplasmic tail interacts with M protein. S1 interacts with murine CEACAM1, and weakly with murine CEACAM2 in tissue culture. In terms of processing, specific enzymatic cleavages in vivo yield mature proteins. The precursor is processed into S1 and S2 by host cell furin or another cellular protease to yield the mature S1 and S2 proteins. Additionally, a second cleavage leads to the release of a fusion peptide after viral attachment to host cell receptor. Post-translationally, the cytoplasmic Cys-rich domain is palmitoylated. Spike glycoprotein is digested within host endosomes.

It localises to the virion membrane. The protein resides in the host endoplasmic reticulum-Golgi intermediate compartment membrane. It is found in the host cell membrane. Attaches the virion to the cell membrane by interacting with host receptor, initiating the infection. Interacts with murine CEACAM1 to mediate viral entry. Functionally, mediates fusion of the virion and cellular membranes by acting as a class I viral fusion protein. Under the current model, the protein has at least three conformational states: pre-fusion native state, pre-hairpin intermediate state, and post-fusion hairpin state. During viral and target cell membrane fusion, the coiled coil regions (heptad repeats) assume a trimer-of-hairpins structure, positioning the fusion peptide in close proximity to the C-terminal region of the ectodomain. The formation of this structure appears to drive apposition and subsequent fusion of viral and target cell membranes. Its function is as follows. Acts as a viral fusion peptide which is unmasked following S2 cleavage occurring upon virus endocytosis. The polypeptide is Spike glycoprotein (Murine coronavirus (strain A59) (MHV-A59)).